We begin with the raw amino-acid sequence, 379 residues long: Carbamoyl phosphate synthase small chain (379 aa).

A CPSase region spans residues 1–187 (MNFTPALLAL…GSGHAPAPAS (187 aa)). Positions 48, 239, and 241 each coordinate L-glutamine. Positions 191–378 (KVVAYDFGVK…IELMKPQGVR (188 aa)) constitute a Glutamine amidotransferase type-1 domain. The active-site Nucleophile is the cysteine 267. Positions 268, 271, 309, 311, and 312 each coordinate L-glutamine. Catalysis depends on residues histidine 351 and glutamate 353.

Belongs to the CarA family. As to quaternary structure, composed of two chains; the small (or glutamine) chain promotes the hydrolysis of glutamine to ammonia, which is used by the large (or ammonia) chain to synthesize carbamoyl phosphate. Tetramer of heterodimers (alpha,beta)4.

The enzyme catalyses hydrogencarbonate + L-glutamine + 2 ATP + H2O = carbamoyl phosphate + L-glutamate + 2 ADP + phosphate + 2 H(+). It carries out the reaction L-glutamine + H2O = L-glutamate + NH4(+). It participates in amino-acid biosynthesis; L-arginine biosynthesis; carbamoyl phosphate from bicarbonate: step 1/1. It functions in the pathway pyrimidine metabolism; UMP biosynthesis via de novo pathway; (S)-dihydroorotate from bicarbonate: step 1/3. Its function is as follows. Small subunit of the glutamine-dependent carbamoyl phosphate synthetase (CPSase). CPSase catalyzes the formation of carbamoyl phosphate from the ammonia moiety of glutamine, carbonate, and phosphate donated by ATP, constituting the first step of 2 biosynthetic pathways, one leading to arginine and/or urea and the other to pyrimidine nucleotides. The small subunit (glutamine amidotransferase) binds and cleaves glutamine to supply the large subunit with the substrate ammonia. This Thioalkalivibrio sulfidiphilus (strain HL-EbGR7) protein is Carbamoyl phosphate synthase small chain.